Here is a 55-residue protein sequence, read N- to C-terminus: MAKPASIKIRLNSTADTGFFYVTKKNARTKTDKMVLKKYDPIVRKHVEFKEGKIK.

It belongs to the bacterial ribosomal protein bL33 family.

This is Large ribosomal subunit protein bL33 from Phenylobacterium zucineum (strain HLK1).